We begin with the raw amino-acid sequence, 154 residues long: SsrA-binding protein (154 aa).

This sequence belongs to the SmpB family.

The protein localises to the cytoplasm. Functionally, required for rescue of stalled ribosomes mediated by trans-translation. Binds to transfer-messenger RNA (tmRNA), required for stable association of tmRNA with ribosomes. tmRNA and SmpB together mimic tRNA shape, replacing the anticodon stem-loop with SmpB. tmRNA is encoded by the ssrA gene; the 2 termini fold to resemble tRNA(Ala) and it encodes a 'tag peptide', a short internal open reading frame. During trans-translation Ala-aminoacylated tmRNA acts like a tRNA, entering the A-site of stalled ribosomes, displacing the stalled mRNA. The ribosome then switches to translate the ORF on the tmRNA; the nascent peptide is terminated with the 'tag peptide' encoded by the tmRNA and targeted for degradation. The ribosome is freed to recommence translation, which seems to be the essential function of trans-translation. The polypeptide is SsrA-binding protein (Methylobacillus flagellatus (strain ATCC 51484 / DSM 6875 / VKM B-1610 / KT)).